The primary structure comprises 739 residues: NAD(P)H-quinone oxidoreductase subunit 5, chloroplastic (739 aa).

Helical transmembrane passes span 9-29 (WVIP…LILI), 39-59 (IWAF…VQLS), 89-109 (IDPL…LVLI), 125-145 (FVYI…SNLI), 147-167 (IYFF…FWFT), 185-205 (GDFG…SLEF), 219-239 (NGVN…GAVA), 258-278 (TPIS…FLLA), 280-300 (LLPL…VGTI), 327-347 (LGYM…FHLI), 354-374 (ALLF…VGYS), 396-416 (TTFL…CFWS), 425-445 (WLYS…TAFY), 542-562 (LFPL…GISF), 610-630 (TLAI…YSFF), and 719-739 (ISSY…FFLS).

It belongs to the complex I subunit 5 family. NDH is composed of at least 16 different subunits, 5 of which are encoded in the nucleus.

It is found in the plastid. Its subcellular location is the chloroplast thylakoid membrane. It catalyses the reaction a plastoquinone + NADH + (n+1) H(+)(in) = a plastoquinol + NAD(+) + n H(+)(out). It carries out the reaction a plastoquinone + NADPH + (n+1) H(+)(in) = a plastoquinol + NADP(+) + n H(+)(out). Its function is as follows. NDH shuttles electrons from NAD(P)H:plastoquinone, via FMN and iron-sulfur (Fe-S) centers, to quinones in the photosynthetic chain and possibly in a chloroplast respiratory chain. The immediate electron acceptor for the enzyme in this species is believed to be plastoquinone. Couples the redox reaction to proton translocation, and thus conserves the redox energy in a proton gradient. The chain is NAD(P)H-quinone oxidoreductase subunit 5, chloroplastic (ndhF) from Triticum aestivum (Wheat).